We begin with the raw amino-acid sequence, 299 residues long: MLFQEIIFKLNEFWHKQGCIIQQPYDIEVGAGTMNPATFFRVLGPEPWYVAYVEPSRRPTDGRYGENPNRLQHYYQYQVILKPSPANVQEIYIESLEYLGIDIEKHDIRFVEDNWESPTLGAWGIGWEVWLDGMEITQFTYFQQCGGFDLFPISAEITYGLERIAMYIQGIDDFKDIKWQDGITYGDIHLQSEVENCIYNFELADVERLRLLFNEYEKEAERLLNEGLTFPGYDYVLKCSHTFNLLDARGAISVVQRSQYISRIRRLAAKAAENYLKSREALGFPLLNKAWRKEEAQIG.

The protein belongs to the class-II aminoacyl-tRNA synthetase family. Tetramer of two alpha and two beta subunits.

It is found in the cytoplasm. The enzyme catalyses tRNA(Gly) + glycine + ATP = glycyl-tRNA(Gly) + AMP + diphosphate. The chain is Glycine--tRNA ligase alpha subunit from Dictyoglomus thermophilum (strain ATCC 35947 / DSM 3960 / H-6-12).